We begin with the raw amino-acid sequence, 978 residues long: Chitin synthase 3 (978 aa).

The span at 1–13 shows a compositional bias: low complexity; that stretch reads MGFNPQGQGNGPN. Disordered stretches follow at residues 1–95 and 108–127; these read MGFN…FDGH and GHYPADQHGRMPGSPGYEYP. The N-linked (GlcNAc...) asparagine glycan is linked to Asn-72. A glycan (N-linked (GlcNAc...) asparagine) is linked at Asn-604. The next 7 helical transmembrane spans lie at 641–661, 686–706, 719–739, 775–795, 803–823, 908–928, and 946–966; these read LVNVLFSWFSLAAFYLTTTII, IVNVLIKYIYIAFLVLQFVLA, VLSFMVFGLIQLYLLVLTGYL, LIIIALFTIYGLNYIASFLYL, SFPQYLVLMSTYINILMVYAF, VILWLLCNIVLIVVVTTDDFI, and VLLYSTAVLSIVRFFGFLWFI.

This sequence belongs to the chitin synthase family. Class III subfamily.

The protein localises to the cell membrane. It carries out the reaction [(1-&gt;4)-N-acetyl-beta-D-glucosaminyl](n) + UDP-N-acetyl-alpha-D-glucosamine = [(1-&gt;4)-N-acetyl-beta-D-glucosaminyl](n+1) + UDP + H(+). In terms of biological role, polymerizes chitin, a structural polymer of the cell wall and septum, by transferring the sugar moiety of UDP-GlcNAc to the non-reducing end of the growing chitin polymer. Is essential for viability. In Fusarium oxysporum f. sp. lycopersici (strain 4287 / CBS 123668 / FGSC 9935 / NRRL 34936) (Fusarium vascular wilt of tomato), this protein is Chitin synthase 3.